Here is a 285-residue protein sequence, read N- to C-terminus: NADPH-dependent 7-cyano-7-deazaguanine reductase (285 aa).

Substrate is bound at residue 91–93 (IES). 93–94 (SK) contacts NADPH. The active-site Thioimide intermediate is the cysteine 192. Aspartate 199 (proton donor) is an active-site residue. 231 to 232 (HE) contacts substrate. 260–261 (RG) lines the NADPH pocket.

The protein belongs to the GTP cyclohydrolase I family. QueF type 2 subfamily. Homodimer.

The protein localises to the cytoplasm. It carries out the reaction 7-aminomethyl-7-carbaguanine + 2 NADP(+) = 7-cyano-7-deazaguanine + 2 NADPH + 3 H(+). It functions in the pathway tRNA modification; tRNA-queuosine biosynthesis. Catalyzes the NADPH-dependent reduction of 7-cyano-7-deazaguanine (preQ0) to 7-aminomethyl-7-deazaguanine (preQ1). This Psychromonas ingrahamii (strain DSM 17664 / CCUG 51855 / 37) protein is NADPH-dependent 7-cyano-7-deazaguanine reductase.